The chain runs to 400 residues: Probable transposase for insertion sequence element ISRM3-like (400 aa).

This sequence belongs to the transposase mutator family.

Its function is as follows. Required for the transposition of the insertion element. The protein is Probable transposase for insertion sequence element ISRM3-like of Sinorhizobium fredii (strain NBRC 101917 / NGR234).